The sequence spans 652 residues: Acetyl-coenzyme A synthetase (652 aa).

CoA-binding positions include 191–194 (RAGN) and T311. ATP contacts are provided by residues 387 to 389 (GEP), 411 to 416 (DTWWQT), D503, and R518. S526 contributes to the CoA binding site. R529 provides a ligand contact to ATP. Mg(2+) contacts are provided by V540, H542, and V545. A CoA-binding site is contributed by R587. K613 carries the post-translational modification N6-acetyllysine.

The protein belongs to the ATP-dependent AMP-binding enzyme family. Mg(2+) is required as a cofactor. In terms of processing, acetylated. Deacetylation by the SIR2-homolog deacetylase activates the enzyme.

The catalysed reaction is acetate + ATP + CoA = acetyl-CoA + AMP + diphosphate. Its function is as follows. Catalyzes the conversion of acetate into acetyl-CoA (AcCoA), an essential intermediate at the junction of anabolic and catabolic pathways. AcsA undergoes a two-step reaction. In the first half reaction, AcsA combines acetate with ATP to form acetyl-adenylate (AcAMP) intermediate. In the second half reaction, it can then transfer the acetyl group from AcAMP to the sulfhydryl group of CoA, forming the product AcCoA. The polypeptide is Acetyl-coenzyme A synthetase (Marinomonas sp. (strain MWYL1)).